A 198-amino-acid chain; its full sequence is Large ribosomal subunit protein bL25 (198 aa).

It belongs to the bacterial ribosomal protein bL25 family. CTC subfamily. As to quaternary structure, part of the 50S ribosomal subunit; part of the 5S rRNA/L5/L18/L25 subcomplex. Contacts the 5S rRNA. Binds to the 5S rRNA independently of L5 and L18.

Its function is as follows. This is one of the proteins that binds to the 5S RNA in the ribosome where it forms part of the central protuberance. This chain is Large ribosomal subunit protein bL25, found in Gloeothece citriformis (strain PCC 7424) (Cyanothece sp. (strain PCC 7424)).